A 620-amino-acid chain; its full sequence is Extensin (620 aa).

The signal sequence occupies residues 1–20; that stretch reads MKLSTLFALVLLLQSTAILS. Residues 34–45 show a composition bias toward pro residues; the sequence is LPPPVTSQPPPS. The interval 34 to 620 is disordered; the sequence is LPPPVTSQPP…PPYGLLLSTP (587 aa). An H-A-P-P repeat occupies 70–73; the sequence is HAPP. Positions 106–129 are enriched in pro residues; sequence NPPPSPVISPSHPPPSYGAPPPSH. The segment covering 145-163 has biased composition (low complexity); sequence SHGHAPPSGGHTPPRGQHP. The H-A-P-P repeat unit spans residues 148–151; sequence HAPP. Positions 164-177 are enriched in basic residues; sequence PSHRRPSPPSRHGH. Positions 178–219 are enriched in pro residues; it reads PPPPTYAQPPPTPIYSPSPQVQPPPTYSPPPPTHVQPTPSPP. A contains the Ser-Pro(4) repeats region spans residues 205–620; sequence SPPPPTHVQP…PPYGLLLSTP (416 aa). 2 consecutive repeat copies span residues 229-235 and 236-242. The span at 229 to 241 shows a compositional bias: basic residues; sequence THRHAPPTHRHAP. The segment at 229–242 is 2 X 7 AA tandem repeats of T-H-R-H-A-P-P; that stretch reads THRHAPPTHRHAPP. 2 stretches are compositionally biased toward pro residues: residues 251–552 and 562–613; these read HLPP…PPHW and GQPP…PPPY. The segment at 499–600 is 3 X approximate tandem repeats; sequence PPTFSPPPPR…PTPTYGQPPS (102 aa).

Post-translationally, hydroxylated on proline residues in the S-P-P-P-P repeat. In terms of processing, O-glycosylated on hydroxyprolines. Expressed in the tip of the emerging lateral roots.

The protein resides in the secreted. It is found in the primary cell wall. In terms of biological role, has a specialized structural function, possibly in the mechanical penetration of the cortex and epidermis of the main root. The chain is Extensin (HRGPNT3) from Nicotiana tabacum (Common tobacco).